A 599-amino-acid polypeptide reads, in one-letter code: MNPNARPHIEKILANMTQLPGVYRMLGKDGELLYVGKAKNLKNRVSSYFVKTIEHPKTQALVARIHDIETLVTRSETEALLLEQNLIKQHRPPYNIMLRDDKSYVYIFVSSDKPYPRIASGRGKGKHQIGKFFGPYPSAYSARDTLLVLQKLFNVRQCENSYFAQRKRPCLQYQIKRCSAPCVGLISPEDYKQDVDNSIRFLQGDTKELNQELIAKMEEAAEQLAFEKAMFYRDRLGLLREVQAQQAVFKIKGEADILAIAFQAGVTCVQIMYVRNGRMLGGKSYFPDMLSDDLGQMLSDFIANFYFQVADEVPSELIVNVELPDRKELEQALQTQFDKKIQIKHKVRETRAEWQELAIMNVQHAIKGQLSNHLELNERFHQLEQVVGRPVDRIECFDISHTMGEATIASCVVFDQGGARKRDYRQFGIEDITAGDDYAAMRQALTRRYKKHIVPDLLLIDGGKGQLHMAMEVMQTLGLDAFMVGVSKGEGRKPGLETLHFTDGSKIQLPEDHKALHLIQQVRDEAHRFAITKHRAKRDKRRAGSVLEVIPGLGPKRRRDLLTHFGGIQGVLKASEKELMLVSGLGPSMARTIYKILHE.

Residues 18–96 (QLPGVYRMLG…IKQHRPPYNI (79 aa)) enclose the GIY-YIG domain. Residues 207 to 242 (KELNQELIAKMEEAAEQLAFEKAMFYRDRLGLLREV) form the UVR domain.

Belongs to the UvrC family. In terms of assembly, interacts with UvrB in an incision complex.

It is found in the cytoplasm. Its function is as follows. The UvrABC repair system catalyzes the recognition and processing of DNA lesions. UvrC both incises the 5' and 3' sides of the lesion. The N-terminal half is responsible for the 3' incision and the C-terminal half is responsible for the 5' incision. The sequence is that of UvrABC system protein C from Acinetobacter baylyi (strain ATCC 33305 / BD413 / ADP1).